The sequence spans 731 residues: Fatty acid oxidation complex subunit alpha (731 aa).

Positions 15–204 (TEKTSAFSLT…RQGLVDEAVP (190 aa)) are enoyl-CoA hydratase. Positions 320 to 729 (KPIHRVGILG…FYPPADKDNS (410 aa)) are 3-hydroxyacyl-CoA dehydrogenase.

The protein in the N-terminal section; belongs to the enoyl-CoA hydratase/isomerase family. In the central section; belongs to the 3-hydroxyacyl-CoA dehydrogenase family. Heterotetramer of two alpha chains (FadJ) and two beta chains (FadI).

It localises to the cytoplasm. The enzyme catalyses a (3S)-3-hydroxyacyl-CoA = a (2E)-enoyl-CoA + H2O. It carries out the reaction a 4-saturated-(3S)-3-hydroxyacyl-CoA = a (3E)-enoyl-CoA + H2O. The catalysed reaction is a (3S)-3-hydroxyacyl-CoA + NAD(+) = a 3-oxoacyl-CoA + NADH + H(+). It catalyses the reaction (3S)-3-hydroxybutanoyl-CoA = (3R)-3-hydroxybutanoyl-CoA. The protein operates within lipid metabolism; fatty acid beta-oxidation. Functionally, catalyzes the formation of a hydroxyacyl-CoA by addition of water on enoyl-CoA. Also exhibits 3-hydroxyacyl-CoA epimerase and 3-hydroxyacyl-CoA dehydrogenase activities. In Pectobacterium atrosepticum (strain SCRI 1043 / ATCC BAA-672) (Erwinia carotovora subsp. atroseptica), this protein is Fatty acid oxidation complex subunit alpha.